The chain runs to 232 residues: 2-C-methyl-D-erythritol 4-phosphate cytidylyltransferase (232 aa).

The protein belongs to the IspD/TarI cytidylyltransferase family. IspD subfamily.

The catalysed reaction is 2-C-methyl-D-erythritol 4-phosphate + CTP + H(+) = 4-CDP-2-C-methyl-D-erythritol + diphosphate. It functions in the pathway isoprenoid biosynthesis; isopentenyl diphosphate biosynthesis via DXP pathway; isopentenyl diphosphate from 1-deoxy-D-xylulose 5-phosphate: step 2/6. Its function is as follows. Catalyzes the formation of 4-diphosphocytidyl-2-C-methyl-D-erythritol from CTP and 2-C-methyl-D-erythritol 4-phosphate (MEP). The polypeptide is 2-C-methyl-D-erythritol 4-phosphate cytidylyltransferase (Geobacter metallireducens (strain ATCC 53774 / DSM 7210 / GS-15)).